We begin with the raw amino-acid sequence, 274 residues long: Probable S-adenosylmethionine-dependent methyltransferase MT3114 (274 aa).

The segment at 1–24 (MCAFVPHVPRHSRGDNPPSASTAS) is disordered.

This sequence belongs to the methyltransferase superfamily.

Functionally, probable S-adenosylmethionine-dependent methyltransferase required for the 6-O-methylation of the polysaccharide backbone of 6-O-methylglucosyl lipopolysaccharides (MGLP). In Mycobacterium tuberculosis (strain CDC 1551 / Oshkosh), this protein is Probable S-adenosylmethionine-dependent methyltransferase MT3114.